A 252-amino-acid polypeptide reads, in one-letter code: Trans-aconitate 2-methyltransferase (252 aa).

The protein belongs to the methyltransferase superfamily. Tam family.

It localises to the cytoplasm. The catalysed reaction is trans-aconitate + S-adenosyl-L-methionine = (E)-3-(methoxycarbonyl)pent-2-enedioate + S-adenosyl-L-homocysteine. Catalyzes the S-adenosylmethionine monomethyl esterification of trans-aconitate. The sequence is that of Trans-aconitate 2-methyltransferase from Escherichia coli O9:H4 (strain HS).